Here is a 337-residue protein sequence, read N- to C-terminus: DNA-directed RNA polymerase subunit alpha (337 aa).

The alpha N-terminal domain (alpha-NTD) stretch occupies residues 1-233 (MVREKVRVST…DLFIPFLHAE (233 aa)). Positions 267–337 (IALKSIFIDQ…KAFHNPFTEE (71 aa)) are alpha C-terminal domain (alpha-CTD).

Belongs to the RNA polymerase alpha chain family. In plastids the minimal PEP RNA polymerase catalytic core is composed of four subunits: alpha, beta, beta', and beta''. When a (nuclear-encoded) sigma factor is associated with the core the holoenzyme is formed, which can initiate transcription.

It is found in the plastid. The protein localises to the chloroplast. The enzyme catalyses RNA(n) + a ribonucleoside 5'-triphosphate = RNA(n+1) + diphosphate. DNA-dependent RNA polymerase catalyzes the transcription of DNA into RNA using the four ribonucleoside triphosphates as substrates. The protein is DNA-directed RNA polymerase subunit alpha of Eucalyptus globulus subsp. globulus (Tasmanian blue gum).